A 113-amino-acid chain; its full sequence is UPF0342 protein SpyM3_0545 (113 aa).

It belongs to the UPF0342 family.

This chain is UPF0342 protein SpyM3_0545, found in Streptococcus pyogenes serotype M3 (strain ATCC BAA-595 / MGAS315).